The following is a 418-amino-acid chain: MSDFDALLANYTSKETPKVHGVICKCVDRHGICPTPHLAKRDLRLTLLGNEIYSKVAGYDSVLPGASPLREDVVLKVASATKLITSIALLQCIDKGLIDLDEPVTKVLPEFDQKQILTDVSGSDLVLEPSKTPITARHLLTHTSGLGYPFTHRLLRLRAEVRNRAGVSPSLRVTERYEMPLVFEPGTGWLYGCSLDWAGVIVSRLHGGISLEQYFVENIWQRLGLSEPFPCFNIARHPEYNARVMGGAIQTPEGRLQPKDHWAFDNPEDQDGGSGLSCTTKDYVAVLADLVSDSPKLLKPATIAEMFTPQLEAKSPGVQMLLGLRPAWDTVSGPIAENAINHGLGGVLCMDDVPEIDQPKGMLGWGGASNIVWWVNRELRVAGFFATQQAPFGNPSVTRLVNAWKKDFWAQFKTIDHA.

S79 acts as the Acyl-ester intermediate in catalysis. Substrate contacts are provided by R176 and Y191.

Belongs to the class-A beta-lactamase family.

The protein operates within secondary metabolite biosynthesis. Functionally, acyltransferase; part of the gene cluster that mediates the biosynthesis of calbistrin A and related compounds. Calbistrin A is a secondary metabolite with an interesting structure that was recently found to have bioactivity against leukemia cells. It consists of two polyketides linked by an ester bond: a bicyclic decalin containing polyketide and a linear 12 carbon dioic acid structure. The polyketide synthase calA is probably responsible for forming the decalin moiety. Because calA lacks a designated enoylreductase (ER) domain, the required activity is provided by the trans-enoyl reductase calK. Following release from the PKS, calF then probably catalyzes the oxidation and the subsequent Diels Alder cycloisomerization that lead to the formation of the decalin moiety. The decalin polyketide backbone includes two C-methyl groups, at C7 and C11 in backbone, of which the C7 position is probably methylated by the methyltransferase domain of calA. A candidate for adding the methyl group at C11, if not done by CalA, is the cluster methyltransferase calH. Several additional tailoring enzymes within the cluster could be involved in the modification of the decalin polyketide product. Those include the 3 cytochrome P450 monooxygenases CalE, CalG and CalL, of which one might be responsible for the introduction of the extra hydroxyl group attached to the backbone of the decalin moiety, at position C9 in the backbone, that allows for attachment of the linear moiety. One tailoring enzyme activity that is expected to be involved in biosynthesis of calbistrin is an acyltransferase for connecting the two polyketide synthase products, and which could be performed by the cluster acyltransferase calJ. The enzyme responsible for the biosynthesis of the linear moiety, probably a second PKS, has not been identified yet. This is Acyltransferase calJ from Penicillium decumbens.